The primary structure comprises 89 residues: Small ribosomal subunit protein uS15 (89 aa).

This sequence belongs to the universal ribosomal protein uS15 family. In terms of assembly, part of the 30S ribosomal subunit. Forms a bridge to the 50S subunit in the 70S ribosome, contacting the 23S rRNA.

Functionally, one of the primary rRNA binding proteins, it binds directly to 16S rRNA where it helps nucleate assembly of the platform of the 30S subunit by binding and bridging several RNA helices of the 16S rRNA. Its function is as follows. Forms an intersubunit bridge (bridge B4) with the 23S rRNA of the 50S subunit in the ribosome. This Corynebacterium efficiens (strain DSM 44549 / YS-314 / AJ 12310 / JCM 11189 / NBRC 100395) protein is Small ribosomal subunit protein uS15.